The chain runs to 420 residues: Shaggy-related protein kinase delta (420 aa).

A disordered region spans residues 1 to 61; sequence MESHLGNGVG…DIIDGVGAEP (61 aa). A compositionally biased stretch (polar residues) spans 10-26; that stretch reads GSSRSAKNTKNTSSSVD. Over residues 28–41 the composition is skewed to basic and acidic residues; that stretch reads LSRDMLEMKIRDKT. Positions 42-53 are enriched in acidic residues; the sequence is EADEERDSEPDI. In terms of domain architecture, Protein kinase spans 82–366; that stretch reads YIAEHVVGTG…AVEACIHPFF (285 aa). ATP is bound by residues 88–96 and Lys111; that span reads VGTGSFGMV. Asp207 acts as the Proton acceptor in catalysis. At Tyr242 the chain carries Phosphotyrosine.

The protein belongs to the protein kinase superfamily. CMGC Ser/Thr protein kinase family. GSK-3 subfamily. Autophosphorylated mainly on threonine and serine residues.

It catalyses the reaction L-seryl-[protein] + ATP = O-phospho-L-seryl-[protein] + ADP + H(+). The enzyme catalyses L-threonyl-[protein] + ATP = O-phospho-L-threonyl-[protein] + ADP + H(+). May mediate extracellular signals to regulate transcription in differentiating cells. In Arabidopsis thaliana (Mouse-ear cress), this protein is Shaggy-related protein kinase delta (ASK4).